Here is an 83-residue protein sequence, read N- to C-terminus: MKASMFLALAGLVLLFVVGYASESEEKEFPIELLSKIFAVDVFKGEGRGCKGFGDSCTPGKNECCPNHACSNKHKWCKVYLGK.

The N-terminal stretch at 1–21 (MKASMFLALAGLVLLFVVGYA) is a signal peptide. The propeptide occupies 22–48 (SESEEKEFPIELLSKIFAVDVFKGEGR). Cystine bridges form between C50-C65, C57-C70, and C64-C77. At L81 the chain carries Leucine amide.

This sequence belongs to the neurotoxin 10 (Hwtx-1) family. 15 (Hntx-3) subfamily. Monomer. In terms of tissue distribution, expressed by the venom gland.

The protein localises to the secreted. In terms of biological role, lethal neurotoxin. Selectively blocks tetrodotoxin-sensitive voltage-gated sodium channels (Nav). Does not affect tetrodotoxin-resistant voltage-gated sodium channels or calcium channels. The sequence is that of Mu-theraphotoxin-Hhn2j 4 from Cyriopagopus hainanus (Chinese bird spider).